The chain runs to 578 residues: Pentatricopeptide repeat-containing protein At4g22760 (578 aa).

13 PPR repeats span residues Asp68–Pro102, Ser103–Gly137, Cys138–Lys168, Asn169–Ser203, Trp204–Lys230, Ser231–Lys261, Asn262–Lys292, Asp293–Ile327, Asp330–Ile364, Asp365–Lys395, Asp396–Pro430, Asn431–Pro465, and Ser466–Gln496. The segment at Val501 to Ser576 is type E motif.

The protein belongs to the PPR family. PCMP-E subfamily.

In Arabidopsis thaliana (Mouse-ear cress), this protein is Pentatricopeptide repeat-containing protein At4g22760 (PCMP-E6).